The chain runs to 511 residues: MEQIRRYLQLERFQQHDFLYPXFFQEYIYVFAHGRGFSRSIWSENENTGYDNKSSLRVMKRLITRMYQQNNFIILPNDFNKKNPFLAKKKFFYSQIIAEGFAFIVEIPFSLRFISYLEGKKKIVKSQNLRSIHSIFPFLEDNFSHLNFVLDILILHPVHVEILVQILRYWVKDASSLHLLRFFLNKYWNSLITPNKASSSLSKKNKRLFVFLYNSHVGGYESSFVFIRNQSSHLGSTPFGVLLERIYFYGKIERLVNVFVKVKDFRTNLWFVKEPYIHYIRYQRKWILASKGTFLFVKKWKCYLIIFWQWHFSLWFYPRRIYINQLSNHYFEFLGYLSNLRMTPSVVRSQSLENTFIINNAIKKIDNFVPIISMIASLAKAKFCNVFGHPISKPVRADLSDSNIIDQFGCICRKFFHYYSGSSKKKSLYRIKYILRLACARTLARKHKSTVRTFLKRLGSELLEEFLLSEEDVLFLTFPKASSSLQGVYRSRIWYLDIIYINDLVDHKYKL.

Belongs to the intron maturase 2 family. MatK subfamily.

It is found in the plastid. Usually encoded in the trnK tRNA gene intron. Probably assists in splicing its own and other chloroplast group II introns. The sequence is that of Maturase K from Lathraea clandestina (Purple toothwort).